We begin with the raw amino-acid sequence, 316 residues long: Adenine deaminase (316 aa).

His14, His16, and His194 together coordinate Zn(2+). Glu197 serves as the catalytic Proton donor. Zn(2+) is bound at residue Asp275. Asp276 provides a ligand contact to substrate.

This sequence belongs to the metallo-dependent hydrolases superfamily. Adenosine and AMP deaminases family. Adenine deaminase type 2 subfamily. It depends on Zn(2+) as a cofactor.

It carries out the reaction adenine + H2O + H(+) = hypoxanthine + NH4(+). Its function is as follows. Catalyzes the hydrolytic deamination of adenine to hypoxanthine. Plays an important role in the purine salvage pathway and in nitrogen catabolism. The chain is Adenine deaminase from Pseudomonas aeruginosa (strain LESB58).